The primary structure comprises 362 residues: S-adenosylmethionine:tRNA ribosyltransferase-isomerase (362 aa).

Belongs to the QueA family. In terms of assembly, monomer.

The protein resides in the cytoplasm. It carries out the reaction 7-aminomethyl-7-carbaguanosine(34) in tRNA + S-adenosyl-L-methionine = epoxyqueuosine(34) in tRNA + adenine + L-methionine + 2 H(+). It functions in the pathway tRNA modification; tRNA-queuosine biosynthesis. In terms of biological role, transfers and isomerizes the ribose moiety from AdoMet to the 7-aminomethyl group of 7-deazaguanine (preQ1-tRNA) to give epoxyqueuosine (oQ-tRNA). This chain is S-adenosylmethionine:tRNA ribosyltransferase-isomerase, found in Yersinia enterocolitica serotype O:8 / biotype 1B (strain NCTC 13174 / 8081).